A 336-amino-acid chain; its full sequence is Deoxyhypusine hydroxylase (336 aa).

2 HEAT-like PBS-type repeats span residues 68-94 (LKHELAYCLGQTRNTDALPFLLDVVQD) and 101-127 (CRHEAAEALGALGYESSLEVLKALRDN). Fe cation is bound by residues histidine 70, glutamate 71, histidine 103, and glutamate 104. The tract at residues 158–179 (LKPSDFTSIDPAPPMPLTAKEP) is disordered. 2 HEAT-like PBS-type repeats span residues 235-261 (FRHEIAFVFGQLCHPASVPSLTETLSD) and 268-295 (VRHEAAEALGSLGDVEGVEDTLKKFLND). Histidine 237, glutamate 238, histidine 270, and glutamate 271 together coordinate Fe cation.

It belongs to the deoxyhypusine hydroxylase family. It depends on Fe(2+) as a cofactor.

It localises to the cytoplasm. It is found in the nucleus. It carries out the reaction [eIF5A protein]-deoxyhypusine + AH2 + O2 = [eIF5A protein]-hypusine + A + H2O. Its pathway is protein modification; eIF5A hypusination. Catalyzes the hydroxylation of the N(6)-(4-aminobutyl)-L-lysine intermediate to form hypusine, an essential post-translational modification only found in mature eIF-5A factor. This is Deoxyhypusine hydroxylase (lia1) from Emericella nidulans (strain FGSC A4 / ATCC 38163 / CBS 112.46 / NRRL 194 / M139) (Aspergillus nidulans).